The following is a 490-amino-acid chain: Hexokinase (490 aa).

The region spanning Gln21–Ala466 is the Hexokinase domain. The interval Asp75–Ile209 is hexokinase small subdomain. The tract at residues Asn210–Asp455 is hexokinase large subdomain.

This sequence belongs to the hexokinase family. In terms of assembly, monomer.

The enzyme catalyses a D-hexose + ATP = a D-hexose 6-phosphate + ADP + H(+). It catalyses the reaction D-fructose + ATP = D-fructose 6-phosphate + ADP + H(+). The catalysed reaction is D-glucose + ATP = D-glucose 6-phosphate + ADP + H(+). It functions in the pathway carbohydrate metabolism; hexose metabolism. The protein operates within carbohydrate degradation; glycolysis; D-glyceraldehyde 3-phosphate and glycerone phosphate from D-glucose: step 1/4. In terms of biological role, catalyzes the phosphorylation of hexose, such as D-glucose and D-fructose, to hexose 6-phosphate (D-glucose 6-phosphate and D-fructose 6-phosphate, respectively). Mediates the initial step of glycolysis by catalyzing phosphorylation of D-glucose to D-glucose 6-phosphate. The sequence is that of Hexokinase (hxkA) from Emericella nidulans (strain FGSC A4 / ATCC 38163 / CBS 112.46 / NRRL 194 / M139) (Aspergillus nidulans).